The sequence spans 142 residues: Midkine-B (142 aa).

The first 20 residues, 1–20 (MELRAFCVILLITILAVSSQ), serve as a signal peptide directing secretion. Cystine bridges form between Cys36–Cys60, Cys44–Cys69, Cys51–Cys73, Cys83–Cys115, and Cys93–Cys125.

It belongs to the pleiotrophin family. In adults, expression is highest in the brain, eye and bone, with lower expression in the heart and lung. Not expressed in the ovary. In the tailbud stage embryo, expressed in the head and tail regions as well as in the central nervous system (CNS).

It is found in the secreted. Functionally, secreted protein that functions as a cytokine and growth factor and mediates its signal through cell-surface proteoglycan and non-proteoglycan receptors. Binds cell-surface proteoglycan receptors via their chondroitin sulfate (CS) groups. Thereby regulates many processes like inflammatory response, cell proliferation, cell adhesion, cell growth, cell survival, tissue regeneration, cell differentiation and cell migration. Inhibits mesoderm formation and promotes neural formation during development. Plays a role in development of the neuromuscular junction (NMJ). Has antibacterial activity against both Gram-positive and Gram-negative bacteria. The protein is Midkine-B (mdk-b) of Xenopus laevis (African clawed frog).